Consider the following 1358-residue polypeptide: Nonribosomal peptide synthetase rstn8 (1358 aa).

Residues 1–23 (MSHSSHYSPVDSGMVPSSSSTED) are disordered. Residues 261 to 659 (YRELDRLSSR…LGEVEYRLHQ (399 aa)) are adenylation. In terms of domain architecture, Carrier spans 795–872 (ETVSPAESTL…DQASLVRPLV (78 aa)). Serine 832 carries the post-translational modification O-(pantetheine 4'-phosphoryl)serine. Positions 909-1322 (EDIYPCTPLQ…DDYSQALHEL (414 aa)) are condensation.

It belongs to the NRP synthetase family. Requires pantetheine 4'-phosphate as cofactor.

The enzyme catalyses restrictinol + glycine + H(+) = restricticin + H2O. Its pathway is antifungal biosynthesis. In terms of biological role, nonribosomal peptide synthetase; part of the gene cluster that mediates the biosynthesis of the tetrahydropyranyl antifungal agent restricticin that acts as an inhibitor of CYP51 and blocks the ergosterol biosynthesis. Within the pathway, rstn8 catalyzes the C3 esterification of restrictinol with glycine to yield restricticin. Rstn8 represents an example of the emerging class of single-module NRPS-like enzymes that perform esterification reactions. Rstn8 displays strict substrate specificity toward glycine as no other natural amino acid is accepted. Rstn8 does not recognize desmethylrestrictinol as a substrate, demonstrating that rstn1-catalyzed methylation, possibly protecting the C4-OH, must precede the final esterification step. The highly reducing polyketide synthase rstn3, the short chain dehydrogenase rstn4, the cyclase rstn5, the FAD-dependent monooxygenase rstn6 and the enoylreductase rstn7 are required to generate the first stable intermediate desmethylrestrictinol. Rstn3 with rstn7 biosynthesize the first polyketide chain intermediate that is reduced by rstn4, followed by epoxidation by rstn6 before 6-endo cyclization via epoxide opening by rstn5 leads to desmethylrestrictinol. The methyltransferase rstn1 then catalyzes the C4 O-methylation of desmethylrestrictinol to produce restrictinol, and the nonribosomal peptide synthetase rstn8 catalyzes the C3 esterification of restrictinol with glycine that leads to restricticin. The protein is Nonribosomal peptide synthetase rstn8 of Aspergillus nomiae NRRL (strain ATCC 15546 / NRRL 13137 / CBS 260.88 / M93).